The following is an 84-amino-acid chain: Small ribosomal subunit protein bS16 (84 aa).

The protein belongs to the bacterial ribosomal protein bS16 family.

The sequence is that of Small ribosomal subunit protein bS16 from Methylococcus capsulatus (strain ATCC 33009 / NCIMB 11132 / Bath).